Here is a 1835-residue protein sequence, read N- to C-terminus: Urea amidolyase (1835 aa).

ATP is bound by residues 122-129 and Lys-747; that span reads GAIIVGKT. Residues 632–1075 form the Biotin carboxylation domain; the sequence is LFDTVLIANR…STNILNSYQY (444 aa). Positions 751–948 constitute an ATP-grasp domain; the sequence is RQIAQKAGVP…LVEWMIRIAA (198 aa). Ser-803 is modified (phosphoserine). 2 residues coordinate ATP: Glu-830 and Asn-865. One can recognise a Biotinyl-binding domain in the interval 1754-1832; it reads DEEEDFPEGA…DSGDIVAVIE (79 aa). An N6-biotinyllysine modification is found at Lys-1798.

Monomer. The cofactor is biotin.

It carries out the reaction urea + hydrogencarbonate + ATP = urea-1-carboxylate + ADP + phosphate + H(+). The enzyme catalyses urea-1-carboxylate + H2O + 3 H(+) = 2 NH4(+) + 2 CO2. The protein operates within nitrogen metabolism; urea degradation; CO(2) and NH(3) from urea (allophanate route): step 1/2. It participates in nitrogen metabolism; urea degradation; CO(2) and NH(3) from urea (allophanate route): step 2/2. In terms of biological role, hydrolysis of urea to ammonia and CO(2). The sequence is that of Urea amidolyase (DUR1,2) from Saccharomyces cerevisiae (strain ATCC 204508 / S288c) (Baker's yeast).